We begin with the raw amino-acid sequence, 190 residues long: Jupiter microtubule associated homolog 2 (190 aa).

An N-acetylmethionine modification is found at Met1. Residues 1–15 show a composition bias toward polar residues; the sequence is MFQGADSQAGKSGSR. Positions 1 to 190 are disordered; sequence MFQGADSQAG…PGGKSSLSFY (190 aa). An N6-acetyllysine modification is found at Lys11. Phosphoserine is present on Ser30. Positions 35 to 44 are enriched in polar residues; that stretch reads ISSSKPNRMA. Residues Ser45, Ser69, and Ser97 each carry the phosphoserine modification. Composition is skewed to basic and acidic residues over residues 110–129 and 138–153; these read KPKDHVLLCEGEDSKSDLKA and EQSDKGSSKEVEHAKI. Ser144 bears the Phosphoserine mark.

Belongs to the JUPITER family. As to quaternary structure, monomer. Dimer. Interacts with TPCN1.

It localises to the cytoplasm. The protein resides in the nucleus. Its function is as follows. Nicotinic acid adenine dinucleotide phosphate (NAADP) binding protein required for NAADP-evoked intracellular calcium release. Confers NAADP-sensitivity to the two pore channels (TPCs) complex. Enables NAADP to activate Ca(2+) release from the endoplasmic reticulum through ryanodine receptors. The sequence is that of Jupiter microtubule associated homolog 2 from Mus musculus (Mouse).